Here is a 52-residue protein sequence, read N- to C-terminus: Large ribosomal subunit protein eL39 (52 aa).

This sequence belongs to the eukaryotic ribosomal protein eL39 family.

In Desulfurococcus amylolyticus (strain DSM 18924 / JCM 16383 / VKM B-2413 / 1221n) (Desulfurococcus kamchatkensis), this protein is Large ribosomal subunit protein eL39.